A 212-amino-acid chain; its full sequence is MAQAIIGAIAASTAGSALGAGIQVGGEAALQSQRYQQNLQLQENSFKHDREMIGYQVEASNQLLAKNLATRYSLLRAGGLTSADAARSVAGAPVTRIVDWNGVRVSAPESSATTLRSGGFMSVPIPFASKQKQVQSSGISNPNYSPSSISRTTSWVESQNSSRFGNLSPYHAEALNTVWLTPPGSTASSTLSSVPRGYFNTDRLPLFANNRR.

The protein belongs to the norovirus VP2 family. Homooligomer. The portal-like structure consists in 12 copies of VP2. Interacts with capsid protein VP1.

The protein resides in the virion. It localises to the host cytoplasm. Functionally, minor structural protein that forms a portal-like structure at a unique three-fold axis of symmetry, following binding to the host receptor. The channel formed by VP2 may allow the delivery of the viral genome through the host endosomal membrane. This Norovirus (strain Human/NoV/United States/Norwalk/1968/GI) (Hu/NV/NV/1968/US) protein is Minor capsid protein VP2.